Consider the following 172-residue polypeptide: T-cell receptor gamma chain C region C7.5 (172 aa).

A c region region spans residues 1-140; the sequence is DKKLDADISP…QFTITSAYYT (140 aa). The helical transmembrane segment at 141 to 160 threads the bilayer; the sequence is YLLLLLKSVIYLAIISFSLL. Topologically, residues 161 to 172 are cytoplasmic; it reads RRTSVCCNEKKS.

It localises to the membrane. This Mus musculus (Mouse) protein is T-cell receptor gamma chain C region C7.5.